Here is an 880-residue protein sequence, read N- to C-terminus: Probable LRR receptor-like serine/threonine-protein kinase At2g28960 (880 aa).

The signal sequence occupies residues 1–24 (MEGRRQRLLVFIFGALAITHLVQA). At 25 to 511 (QPPDQRGFIS…NNNNQTYIVP (487 aa)) the chain is on the extracellular side. 8 N-linked (GlcNAc...) asparagine glycosylation sites follow: Asn180, Asn201, Asn228, Asn254, Asn287, Asn403, Asn430, and Asn441. LRR repeat units follow at residues 409-430 (RIISLDLSSRGLKGVIAPAFQN), 433-455 (ELRKLDLSNNSFTGGVPEFLASM), and 457-476 (SLSIINLNWNDLTGPLPKLL). Asn505 carries an N-linked (GlcNAc...) asparagine glycan. The chain crosses the membrane as a helical span at residues 512-532 (VVASVASVLIIIAVLILILVF). The Cytoplasmic portion of the chain corresponds to 533–880 (KKRRPTQVDS…FTTEINPKAR (348 aa)). Thr564 carries the post-translational modification Phosphothreonine. One can recognise a Protein kinase domain in the interval 573–846 (DNFERVLGEG…QVTNELKQCL (274 aa)). Residues 579–587 (LGEGGFGVV) and Lys601 each bind ATP. Residue Tyr646 is modified to Phosphotyrosine. The Proton acceptor role is filled by Asp698. Ser732 carries the phosphoserine modification. Residues Thr733 and Thr738 each carry the phosphothreonine modification. Position 746 is a phosphotyrosine (Tyr746). Positions 854–880 (GVREDMGSRSSVEMSTSFTTEINPKAR) are disordered. Polar residues predominate over residues 861–880 (SRSSVEMSTSFTTEINPKAR).

It belongs to the protein kinase superfamily. Ser/Thr protein kinase family.

It is found in the membrane. It catalyses the reaction L-seryl-[protein] + ATP = O-phospho-L-seryl-[protein] + ADP + H(+). The enzyme catalyses L-threonyl-[protein] + ATP = O-phospho-L-threonyl-[protein] + ADP + H(+). The polypeptide is Probable LRR receptor-like serine/threonine-protein kinase At2g28960 (Arabidopsis thaliana (Mouse-ear cress)).